We begin with the raw amino-acid sequence, 339 residues long: Glyceraldehyde-3-phosphate dehydrogenase (339 aa).

Residues R13 to I14, D35, and K84 contribute to the NAD(+) site. D-glyceraldehyde 3-phosphate-binding positions include S156–T158, T187, T216–G217, and R239. C157 serves as the catalytic Nucleophile. An NAD(+)-binding site is contributed by N321.

The protein belongs to the glyceraldehyde-3-phosphate dehydrogenase family. In terms of assembly, homotetramer.

Its subcellular location is the cytoplasm. The catalysed reaction is D-glyceraldehyde 3-phosphate + phosphate + NAD(+) = (2R)-3-phospho-glyceroyl phosphate + NADH + H(+). Its pathway is carbohydrate degradation; glycolysis; pyruvate from D-glyceraldehyde 3-phosphate: step 1/5. The chain is Glyceraldehyde-3-phosphate dehydrogenase from Onchocerca volvulus.